We begin with the raw amino-acid sequence, 128 residues long: MNKVFIIGVCLFIVSQAVLAVPWDSDESSDERLSDRSDESREEPRKLVVSDDDSREDSNESAEVRRRDDSRESEEEPRKLSADTSDEDSDDSQESPLDLFFKTLRDSKISRAQRAALLKALLSRYAGY.

Residues 1 to 20 (MNKVFIIGVCLFIVSQAVLA) form the signal peptide. The disordered stretch occupies residues 23–95 (WDSDESSDER…DEDSDDSQES (73 aa)). 2 stretches are compositionally biased toward basic and acidic residues: residues 30-49 (DERLSDRSDESREEPRKLVV) and 56-81 (EDSNESAEVRRRDDSRESEEEPRKLS). The segment covering 84 to 93 (TSDEDSDDSQ) has biased composition (acidic residues).

Phosphorylated on Ser and Tyr residues. Calcium-binding activity is dependent on serine phosphorylation but not on tyrosine phosphorylation. In terms of tissue distribution, posterior caeca epithelium of the gut.

Its subcellular location is the secreted. Functionally, plays a role in cuticle calcification. May induce precipitation of the calcium stored in the posterior caeca as calcium carbonate. The polypeptide is Orchestin (Cryptorchestia cavimana (Amphipod)).